The chain runs to 61 residues: Bactridin-1 (61 aa).

Residues 1 to 61 (KDGYIIEHRG…KIFDSNNLKC (61 aa)) form the LCN-type CS-alpha/beta domain. 4 disulfide bridges follow: Cys-11–Cys-61, Cys-15–Cys-37, Cys-23–Cys-42, and Cys-27–Cys-44.

This sequence belongs to the long (4 C-C) scorpion toxin superfamily. Sodium channel inhibitor family. Beta subfamily. Expressed by the venom gland.

The protein resides in the secreted. Its function is as follows. Shows antibacterial activity against both Gram-positive bacteria (B.subtilis, M.luteus, E.faecalis) and Gram-negative bacteria (P.aeruginosa, Y.enterocolitica, A.calcoaceticus). Modifies membrane sodium permeability on Y.enterocolitica. Is toxic to cockroaches and crabs, but is not toxic to mice. Does not induce haemolysis in human erythrocytes. Acts by inhibiting the sodium (Nav) currents. The chain is Bactridin-1 from Tityus discrepans (Venezuelan scorpion).